We begin with the raw amino-acid sequence, 398 residues long: MQDLKQRPVSVFREFLDSEAAGGIILMVAAALALIVANSPLAETYFSVLHAYLGPLSVSHWVNDGLMAVFFLLVGLEIKREMLDGQLSTWPRRVLPGIAAAGGMLVPALVYVFINRNNSAALSGWAIPTATDIAFALGVLSLLGSRVPASLKVFLTALAIIDDLGAVIIIAIFYTSGLSLAYLGAAFAVIAALVVLNRMRVMTLLPYLVLGAILWVLVLKSGVHATLAGVALALTIPLERSAGVGHDLDHSPLHRLEHGLHKIVPFFVIPIFGFANAGVSLAGLSLGALIEPLTLGVAAGLVVGKLVGVFGSSALAIRLGLADLPAHTGWSHMIGISLLCGIGFTMSLFIGLLAFASDVALQDAVKVGILAGSFVAAILGAAVLLMAPAAGVAEEETE.

The next 12 helical transmembrane spans lie at 21–41 (AGGI…NSPL), 56–76 (LSVS…LVGL), 94–114 (VLPG…YVFI), 124–144 (GWAI…SLLG), 153–173 (VFLT…IAIF), 176–196 (SGLS…LVVL), 201–221 (VMTL…VLKS), 263–283 (IVPF…SLAG), 284–304 (LSLG…LVVG), 306–326 (LVGV…DLPA), 333–353 (MIGI…IGLL), and 367–387 (VGIL…LLMA).

Belongs to the NhaA Na(+)/H(+) (TC 2.A.33) antiporter family.

The protein localises to the cell inner membrane. It carries out the reaction Na(+)(in) + 2 H(+)(out) = Na(+)(out) + 2 H(+)(in). In terms of biological role, na(+)/H(+) antiporter that extrudes sodium in exchange for external protons. The sequence is that of Na(+)/H(+) antiporter NhaA from Mesorhizobium japonicum (strain LMG 29417 / CECT 9101 / MAFF 303099) (Mesorhizobium loti (strain MAFF 303099)).